An 843-amino-acid chain; its full sequence is Probable disease resistance protein At5g47250 (843 aa).

Positions 28-58 (MLKENLVLLKSAFDELKAEKEDVVNRVNAGE) form a coiled coil. The 300-residue stretch at 141–440 (TEQPPPPVVE…GEGFIDEKDG (300 aa)) folds into the NB-ARC domain. 183–190 (GMGGVGKT) is an ATP binding site. LRR repeat units follow at residues 510-531 (TVTK…PEFP), 535-556 (NLVT…FFLV), 559-581 (TLVV…ISAL), 583-604 (SLRL…LGVL), and 606-628 (KLIH…SELQ).

It belongs to the disease resistance NB-LRR family.

Probable disease resistance protein. This Arabidopsis thaliana (Mouse-ear cress) protein is Probable disease resistance protein At5g47250.